Reading from the N-terminus, the 339-residue chain is D-alanine--D-alanine ligase (339 aa).

An ATP-grasp domain is found at 126 to 333; it reads KQVLASVGMP…YSELVTRLVE (208 aa). 158-213 serves as a coordination point for ATP; that stretch reads AGELGYPLFVKPANLGSSVGISKVSGPGELERALDLAFSLGRRVILEAMTAHKPRE. The Mg(2+) site is built by Asp-286, Glu-300, and Asn-302.

The protein belongs to the D-alanine--D-alanine ligase family. The cofactor is Mg(2+). It depends on Mn(2+) as a cofactor.

The protein resides in the cytoplasm. The enzyme catalyses 2 D-alanine + ATP = D-alanyl-D-alanine + ADP + phosphate + H(+). It participates in cell wall biogenesis; peptidoglycan biosynthesis. Its function is as follows. Cell wall formation. This Deinococcus geothermalis (strain DSM 11300 / CIP 105573 / AG-3a) protein is D-alanine--D-alanine ligase.